A 122-amino-acid chain; its full sequence is Phosphoribosyl-ATP pyrophosphatase (122 aa).

It belongs to the PRA-PH family.

The protein resides in the cytoplasm. The catalysed reaction is 1-(5-phospho-beta-D-ribosyl)-ATP + H2O = 1-(5-phospho-beta-D-ribosyl)-5'-AMP + diphosphate + H(+). The protein operates within amino-acid biosynthesis; L-histidine biosynthesis; L-histidine from 5-phospho-alpha-D-ribose 1-diphosphate: step 2/9. The sequence is that of Phosphoribosyl-ATP pyrophosphatase from Cupriavidus metallidurans (strain ATCC 43123 / DSM 2839 / NBRC 102507 / CH34) (Ralstonia metallidurans).